A 359-amino-acid polypeptide reads, in one-letter code: Tropomodulin-1 (359 aa).

The disordered stretch occupies residues 39 to 61 (PDNALLPAGLRQKDQTTKAPTGP). The segment at 39 to 138 (PDNALLPAGL…CDIAAILGMH (100 aa)) is tropomyosin-binding.

This sequence belongs to the tropomodulin family. Binds to the N-terminus of tropomyosin and to actin. Interacts with FLII.

It localises to the cytoplasm. It is found in the cytoskeleton. Its function is as follows. Blocks the elongation and depolymerization of the actin filaments at the pointed end. The Tmod/TM complex contributes to the formation of the short actin protofilament, which in turn defines the geometry of the membrane skeleton. May play an important role in regulating the organization of actin filaments by preferentially binding to a specific tropomyosin isoform at its N-terminus. The chain is Tropomodulin-1 (TMOD1) from Bos taurus (Bovine).